Here is a 170-residue protein sequence, read N- to C-terminus: Shikimate kinase (170 aa).

11–16 (GAGKTT) provides a ligand contact to ATP. Threonine 15 provides a ligand contact to Mg(2+). Aspartate 33, arginine 57, and glycine 80 together coordinate substrate. Arginine 119 lines the ATP pocket. A substrate-binding site is contributed by arginine 141.

The protein belongs to the shikimate kinase family. As to quaternary structure, monomer. It depends on Mg(2+) as a cofactor.

The protein resides in the cytoplasm. The catalysed reaction is shikimate + ATP = 3-phosphoshikimate + ADP + H(+). Its pathway is metabolic intermediate biosynthesis; chorismate biosynthesis; chorismate from D-erythrose 4-phosphate and phosphoenolpyruvate: step 5/7. Its function is as follows. Catalyzes the specific phosphorylation of the 3-hydroxyl group of shikimic acid using ATP as a cosubstrate. The sequence is that of Shikimate kinase from Azobacteroides pseudotrichonymphae genomovar. CFP2.